The sequence spans 154 residues: Nuclear cap-binding protein subunit 2-A (154 aa).

Residues Tyr-10, Tyr-33, Arg-102–Asp-106, Arg-113–Arg-117, and Gln-123–Val-124 contribute to the mRNA site. In terms of domain architecture, RRM spans Ser-30–Gly-108.

It belongs to the RRM NCBP2 family. Component of the nuclear cap-binding complex (CBC), a heterodimer composed of Cbp80 and Cbp20 that interacts with m7GpppG-capped RNA. Interacts with Ars2.

Its subcellular location is the nucleus. In terms of biological role, component of the cap-binding complex (CBC), which binds co-transcriptionally to the 5' cap of pre-mRNAs and is involved in various processes such as pre-mRNA splicing and RNA-mediated gene silencing (RNAi). The CBC complex is involved in miRNA-mediated RNA interference via its interaction with Ars2 and is required for primary microRNAs (miRNAs) processing. Also involved in innate immunity via the short interfering RNAs (siRNAs) processing machinery by restricting the viral RNA production. In the CBC complex, Cbp20 recognizes and binds capped RNAs (m7GpppG-capped RNA) but requires Cbp80 to stabilize the movement of its N-terminal loop and lock the CBC into a high affinity cap-binding state with the cap structure. This is Nuclear cap-binding protein subunit 2-A (Cbp20-A) from Drosophila virilis (Fruit fly).